A 488-amino-acid chain; its full sequence is DNA polymerase processivity factor (488 aa).

Disordered stretches follow at residues 1–26, 331–453, and 469–488; these read MTDSPGGVAPASPVEDASDASLGQPE, SPSA…RSGS, and PGAFSAFRGGPQTPYGFGFP. Residues 331–344 show a composition bias toward low complexity; the sequence is SPSAGSSASRASGS. The span at 345-355 shows a compositional bias: polar residues; the sequence is EPTDSQDSASD. A compositionally biased stretch (low complexity) spans 368-379; it reads AARAGEAGALHA. Over residues 383–393 the composition is skewed to polar residues; it reads PSSTTRVTPTT. A Bipartite nuclear localization signal motif is present at residues 394-413; that stretch reads KRGRSGGEDARADTALKKPK. The span at 398-409 shows a compositional bias: basic and acidic residues; that stretch reads SGGEDARADTAL. Positions 437 to 453 are enriched in low complexity; the sequence is ADGTAARPAAPDARSGS.

The protein belongs to the herpesviridae DNA polymerase processivity factor family. As to quaternary structure, interacts with the DNA polymerase catalytic subunit UL30. Interacts with the origin-binding protein.

It localises to the host nucleus. Functionally, plays an essential role in viral DNA replication by acting as the polymerase accessory subunit. Associates with the viral polymerase to increase its processivity and forms high-affinity direct interactions with DNA. Facilitates the origin-binding protein UL9 loading onto DNA thus increasing its ability to assemble into a functional complex capable of unwinding duplex DNA. The chain is DNA polymerase processivity factor from Homo sapiens (Human).